A 381-amino-acid polypeptide reads, in one-letter code: 4-hydroxy-3-methylbut-2-en-1-yl diphosphate synthase (flavodoxin) (381 aa).

[4Fe-4S] cluster-binding residues include cysteine 280, cysteine 283, cysteine 315, and glutamate 322.

The protein belongs to the IspG family. [4Fe-4S] cluster is required as a cofactor.

The catalysed reaction is (2E)-4-hydroxy-3-methylbut-2-enyl diphosphate + oxidized [flavodoxin] + H2O + 2 H(+) = 2-C-methyl-D-erythritol 2,4-cyclic diphosphate + reduced [flavodoxin]. It participates in isoprenoid biosynthesis; isopentenyl diphosphate biosynthesis via DXP pathway; isopentenyl diphosphate from 1-deoxy-D-xylulose 5-phosphate: step 5/6. Functionally, converts 2C-methyl-D-erythritol 2,4-cyclodiphosphate (ME-2,4cPP) into 1-hydroxy-2-methyl-2-(E)-butenyl 4-diphosphate. This chain is 4-hydroxy-3-methylbut-2-en-1-yl diphosphate synthase (flavodoxin), found in Clavibacter michiganensis subsp. michiganensis (strain NCPPB 382).